A 352-amino-acid chain; its full sequence is Fe(3+) ions import ATP-binding protein FbpC 1 (352 aa).

Residues 11 to 241 (VELKHITKRF…PASRFMASFM (231 aa)) form the ABC transporter domain. 43–50 (GPSGCGKT) lines the ATP pocket.

The protein belongs to the ABC transporter superfamily. Fe(3+) ion importer (TC 3.A.1.10) family. As to quaternary structure, the complex is composed of two ATP-binding proteins (FbpC), two transmembrane proteins (FbpB) and a solute-binding protein (FbpA).

The protein localises to the cell inner membrane. The catalysed reaction is Fe(3+)(out) + ATP + H2O = Fe(3+)(in) + ADP + phosphate + H(+). In terms of biological role, part of the ABC transporter complex FbpABC involved in Fe(3+) ions import. Responsible for energy coupling to the transport system. In Pectobacterium atrosepticum (strain SCRI 1043 / ATCC BAA-672) (Erwinia carotovora subsp. atroseptica), this protein is Fe(3+) ions import ATP-binding protein FbpC 1.